Consider the following 760-residue polypeptide: Probable 3',5'-cyclic phosphodiesterase pde-6 (760 aa).

2 disordered regions span residues 1–47 (MGDR…AATA) and 410–429 (KRSVVDAHREKRGSHGERRR). The segment covering 33–47 (PAARRGAQRAPAATA) has biased composition (low complexity). Over residues 412–429 (SVVDAHREKRGSHGERRR) the composition is skewed to basic and acidic residues. The PDEase domain occupies 426–750 (ERRRVSADVK…EKWKVMTSQW (325 aa)). His-502 (proton donor) is an active-site residue. A divalent metal cation contacts are provided by His-506, His-542, Asp-543, and Asp-656.

Belongs to the cyclic nucleotide phosphodiesterase family. It depends on a divalent metal cation as a cofactor.

The catalysed reaction is a nucleoside 3',5'-cyclic phosphate + H2O = a nucleoside 5'-phosphate + H(+). The sequence is that of Probable 3',5'-cyclic phosphodiesterase pde-6 (pde-6) from Caenorhabditis elegans.